Reading from the N-terminus, the 365-residue chain is 3-isopropylmalate dehydrogenase (365 aa).

An NAD(+)-binding site is contributed by 80-91 (GPKWGTGAVRPE). Substrate-binding residues include Arg98, Arg108, Arg137, and Asp226. Mg(2+)-binding residues include Asp226, Asp251, and Asp255. 290-301 (GSAPDLPKGKVN) provides a ligand contact to NAD(+).

Belongs to the isocitrate and isopropylmalate dehydrogenases family. In terms of assembly, homodimer. Mg(2+) is required as a cofactor. The cofactor is Mn(2+).

It is found in the cytoplasm. The catalysed reaction is (2R,3S)-3-isopropylmalate + NAD(+) = 4-methyl-2-oxopentanoate + CO2 + NADH. It functions in the pathway amino-acid biosynthesis; L-leucine biosynthesis; L-leucine from 3-methyl-2-oxobutanoate: step 3/4. Catalyzes the oxidation of 3-carboxy-2-hydroxy-4-methylpentanoate (3-isopropylmalate) to 3-carboxy-4-methyl-2-oxopentanoate. The product decarboxylates to 4-methyl-2 oxopentanoate. In Candida glabrata (strain ATCC 2001 / BCRC 20586 / JCM 3761 / NBRC 0622 / NRRL Y-65 / CBS 138) (Yeast), this protein is 3-isopropylmalate dehydrogenase (LEU2).